The chain runs to 85 residues: Neurotoxin beta-KTx 14.3 (85 aa).

An N-terminal signal peptide occupies residues 1–20 (MKQYIFFLALIVLTATFAEA). The propeptide occupies 21-37 (GKKTEILDKVKKVFSKG). One can recognise a BetaSPN-type CS-alpha/beta domain in the interval 49 to 85 (ELGCPFIEKWCEDHCESKKQVGKCENFDCSCVKLGGK). 3 disulfides stabilise this stretch: C52–C72, C59–C77, and C63–C79.

It belongs to the long chain scorpion toxin family. Class 2 subfamily. In terms of tissue distribution, expressed by the venom gland.

It is found in the secreted. In terms of biological role, toxin with activity on voltage-gated potassium channels. Moderately and reversibly blocks up to 50% of the activity of Kv7.1/KCNQ1 (tested at 22 uM). 3D-structure modeling of the KCNQ1-toxin complex shows that the toxin interacts with the channel pore domain. Additionally, shows a very weak effect to block voltage-gated potassium channel Kv1.1/KCNA1. Its function is as follows. Has a very weak effect to block voltage-gated potassium channel Kv1.1/KCNA1. The polypeptide is Neurotoxin beta-KTx 14.3 (Lychas mucronatus (Chinese swimming scorpion)).